Reading from the N-terminus, the 872-residue chain is Extended synaptotagmin-2-A (872 aa).

Residues 1-25 (MSSESSAEKGPPPSPAENVQPGVPP) are disordered. Over 1-31 (MSSESSAEKGPPPSPAENVQPGVPPAAEEPG) the chain is Cytoplasmic. Residues 32-52 (MISVDIAGLFYQFSKTFILIF) traverse the membrane as a helical segment. Topologically, residues 53–55 (PVY) are lumenal. Residues 56–76 (VLGYFGLSFSWLLIALVLLLW) traverse the membrane as a helical segment. At 77 to 872 (WRRNKGNKNS…EDGTRPAVSS (796 aa)) the chain is on the cytoplasmic side. The SMP-LTD domain maps to 119-298 (DIERAEWLNK…LPNRITVPLV (180 aa)). C2 domains follow at residues 297–417 (LVSD…DEWF) and 442–588 (NLDQ…HLNN). The Ca(2+) site is built by K328, D329, D341, D388, E389, D390, D392, D394, and D395. The span at 608–617 (KPVRSPDEQH) shows a compositional bias: basic and acidic residues. Residues 608–711 (KPVRSPDEQH…EPTPSIASDI (104 aa)) are disordered. Over residues 632-652 (PPTPQMPSPSPAVAHKPPPTP) the composition is skewed to pro residues. Over residues 664-681 (NKGTPPSASPKSPTELHQ) the composition is skewed to polar residues. Low complexity predominate over residues 682-696 (SSSSLSGSSFTYSPS). The C2 3 domain maps to 737–859 (PLGQIQLTIR…DAAKGWTQWY (123 aa)). The segment at 784 to 791 (KRRSGRRK) is required for phosphatidylinositol 4,5-bisphosphate-dependent location at the cell membrane.

This sequence belongs to the extended synaptotagmin family. Interacts with fgfr1 that has been activated by fgf1 binding. Interacts (via C2 domains) with the AP-2 complex (via an alpha subunit). Identified in a complex with the AP-2 complex and fgfr1.

Its subcellular location is the cell membrane. It is found in the endoplasmic reticulum membrane. In terms of biological role, tethers the endoplasmic reticulum to the cell membrane and promotes the formation of appositions between the endoplasmic reticulum and the cell membrane. Binds glycerophospholipids in a barrel-like domain and may play a role in cellular lipid transport. Plays a role in the rapid internalization of fgfr1 that has been activated by fgf1 binding; this occurs most likely via the AP-2 complex. Required for normal fgf signaling and the activation of downstream signaling cascades via its role in the internalization of activated fgfr1. Required for normal embryonic development via its role in fgf signaling and the downstream regulation of t/xBRA expression. This is Extended synaptotagmin-2-A (esyt2-a) from Xenopus laevis (African clawed frog).